The primary structure comprises 346 residues: Phenylalanine--tRNA ligase alpha subunit (346 aa).

Residue Glu-260 participates in Mg(2+) binding.

It belongs to the class-II aminoacyl-tRNA synthetase family. Phe-tRNA synthetase alpha subunit type 1 subfamily. Tetramer of two alpha and two beta subunits. Mg(2+) is required as a cofactor.

Its subcellular location is the cytoplasm. It catalyses the reaction tRNA(Phe) + L-phenylalanine + ATP = L-phenylalanyl-tRNA(Phe) + AMP + diphosphate + H(+). This is Phenylalanine--tRNA ligase alpha subunit from Herpetosiphon aurantiacus (strain ATCC 23779 / DSM 785 / 114-95).